We begin with the raw amino-acid sequence, 317 residues long: Transaldolase (317 aa).

K132 serves as the catalytic Schiff-base intermediate with substrate.

It belongs to the transaldolase family. Type 1 subfamily. As to quaternary structure, homodimer.

It localises to the cytoplasm. The enzyme catalyses D-sedoheptulose 7-phosphate + D-glyceraldehyde 3-phosphate = D-erythrose 4-phosphate + beta-D-fructose 6-phosphate. Its pathway is carbohydrate degradation; pentose phosphate pathway; D-glyceraldehyde 3-phosphate and beta-D-fructose 6-phosphate from D-ribose 5-phosphate and D-xylulose 5-phosphate (non-oxidative stage): step 2/3. Functionally, transaldolase is important for the balance of metabolites in the pentose-phosphate pathway. This is Transaldolase from Yersinia pseudotuberculosis serotype O:3 (strain YPIII).